The chain runs to 106 residues: Nucleoid-associated protein RPB_0667 (106 aa).

The protein belongs to the YbaB/EbfC family. As to quaternary structure, homodimer.

It is found in the cytoplasm. Its subcellular location is the nucleoid. Its function is as follows. Binds to DNA and alters its conformation. May be involved in regulation of gene expression, nucleoid organization and DNA protection. This is Nucleoid-associated protein RPB_0667 from Rhodopseudomonas palustris (strain HaA2).